The chain runs to 442 residues: Proline--tRNA ligase (442 aa).

Belongs to the class-II aminoacyl-tRNA synthetase family. ProS type 2 subfamily. Homodimer.

It localises to the cytoplasm. The enzyme catalyses tRNA(Pro) + L-proline + ATP = L-prolyl-tRNA(Pro) + AMP + diphosphate. Its function is as follows. Catalyzes the attachment of proline to tRNA(Pro) in a two-step reaction: proline is first activated by ATP to form Pro-AMP and then transferred to the acceptor end of tRNA(Pro). In Sinorhizobium medicae (strain WSM419) (Ensifer medicae), this protein is Proline--tRNA ligase.